We begin with the raw amino-acid sequence, 839 residues long: Probable beta-glucosidase I (839 aa).

Asn197 carries N-linked (GlcNAc...) asparagine glycosylation. Residue Asp225 is part of the active site. The 161-residue stretch at 395 to 555 (DGKKGFSFRV…SQEELIAKAA (161 aa)) folds into the PA14 domain.

The protein belongs to the glycosyl hydrolase 3 family.

The protein localises to the secreted. The catalysed reaction is Hydrolysis of terminal, non-reducing beta-D-glucosyl residues with release of beta-D-glucose.. The protein operates within glycan metabolism; cellulose degradation. Beta-glucosidases are one of a number of cellulolytic enzymes involved in the degradation of cellulosic biomass. Catalyzes the last step releasing glucose from the inhibitory cellobiose. In Aspergillus terreus (strain NIH 2624 / FGSC A1156), this protein is Probable beta-glucosidase I (bglI).